A 462-amino-acid chain; its full sequence is MQLLNIYNTLAREKQPFVPIEPGKVRMYVCGMTVYDYCHVGHARVMVVFDMVHRWLRAAGYEVTYVQNITDIDDKIIRRAAENGETIGELTTRFIQYMHEDAAALGVIRPDHEPRATDYVPQMLDMIGKLEAKGLAYQASDGDVNYSVRKFAGYGKLSGKSLEDLRAGERVSANDAKQDPLDFVLWKSAKASEPPESKWDSKWGAGRPGWHIECSAMSCTLLGEHFDIHGGGADLQFPHHENEIAQSEGASGKPFVNMWMHNGFVRINDEKMSKSLGNFFTIREVLKSYDAEVVRFFILRAHYRSPLNYSDAHLDDARHALTRLYTALKDSQPGGCAVDWDEPHARRFAEAMGDDFNTPIAMSVLFDLASEINRTGSTAAARQLKGLAGTLGLLERDPHTFLQGGRSDDGISPEQIETLIAARKTAKVERNFAEADRIRAQLLEAGIVLEDKPGGATEWRRA.

Cys30 serves as a coordination point for Zn(2+). Positions Met32–His42 match the 'HIGH' region motif. Zn(2+) contacts are provided by Cys214, His239, and Glu243. Positions Lys271–Ser275 match the 'KMSKS' region motif. ATP is bound at residue Lys274.

The protein belongs to the class-I aminoacyl-tRNA synthetase family. As to quaternary structure, monomer. Zn(2+) is required as a cofactor.

Its subcellular location is the cytoplasm. It catalyses the reaction tRNA(Cys) + L-cysteine + ATP = L-cysteinyl-tRNA(Cys) + AMP + diphosphate. The chain is Cysteine--tRNA ligase from Cupriavidus necator (strain ATCC 17699 / DSM 428 / KCTC 22496 / NCIMB 10442 / H16 / Stanier 337) (Ralstonia eutropha).